The following is a 529-amino-acid chain: tRNA-2-methylthio-N(6)-dimethylallyladenosine synthase 1 (529 aa).

The tract at residues 1–21 (MTQDHIVTERPPATRNDTAGN) is disordered. The MTTase N-terminal domain maps to 25–141 (RTYEVRTLGC…LPVLLERSRH (117 aa)). [4Fe-4S] cluster contacts are provided by C34, C70, C104, C178, C182, and C185. A Radical SAM core domain is found at 164–407 (RDSAYAAWVS…VALQERISLE (244 aa)). One can recognise a TRAM domain in the interval 410–480 (RSLVGTRQEL…PHHLIADGPL (71 aa)). The disordered stretch occupies residues 481–504 (LQHRRTPAGDASERGQTPTTRGVG).

This sequence belongs to the methylthiotransferase family. MiaB subfamily. As to quaternary structure, monomer. [4Fe-4S] cluster is required as a cofactor.

Its subcellular location is the cytoplasm. It carries out the reaction N(6)-dimethylallyladenosine(37) in tRNA + (sulfur carrier)-SH + AH2 + 2 S-adenosyl-L-methionine = 2-methylsulfanyl-N(6)-dimethylallyladenosine(37) in tRNA + (sulfur carrier)-H + 5'-deoxyadenosine + L-methionine + A + S-adenosyl-L-homocysteine + 2 H(+). Catalyzes the methylthiolation of N6-(dimethylallyl)adenosine (i(6)A), leading to the formation of 2-methylthio-N6-(dimethylallyl)adenosine (ms(2)i(6)A) at position 37 in tRNAs that read codons beginning with uridine. The sequence is that of tRNA-2-methylthio-N(6)-dimethylallyladenosine synthase 1 from Mycobacterium marinum (strain ATCC BAA-535 / M).